Reading from the N-terminus, the 501-residue chain is Ribose import ATP-binding protein RbsA (501 aa).

2 ABC transporter domains span residues 5–241 (LQLK…VGRK) and 252–495 (APGD…VGKL). 37–44 (GENGAGKS) contributes to the ATP binding site.

The protein belongs to the ABC transporter superfamily. Ribose importer (TC 3.A.1.2.1) family. The complex is composed of an ATP-binding protein (RbsA), two transmembrane proteins (RbsC) and a solute-binding protein (RbsB).

It is found in the cell inner membrane. It catalyses the reaction D-ribose(out) + ATP + H2O = D-ribose(in) + ADP + phosphate + H(+). In terms of biological role, part of the ABC transporter complex RbsABC involved in ribose import. Responsible for energy coupling to the transport system. This chain is Ribose import ATP-binding protein RbsA, found in Escherichia coli O6:H1 (strain CFT073 / ATCC 700928 / UPEC).